The chain runs to 108 residues: Small cysteine and glycine repeat-containing protein 8 (108 aa).

Positions 4 to 84 (CGCGGCGGGC…RRTCSSCGCG (81 aa)) are 12 X 2 AA repeats of CG.

Belongs to the KRTAP type 28 family.

In the hair cortex, hair keratin intermediate filaments are embedded in an interfilamentous matrix, consisting of hair keratin-associated proteins (KRTAP), which are essential for the formation of a rigid and resistant hair shaft through their extensive disulfide bond cross-linking with abundant cysteine residues of hair keratins. The matrix proteins include the high-sulfur and high-glycine-tyrosine keratins. In Homo sapiens (Human), this protein is Small cysteine and glycine repeat-containing protein 8.